Consider the following 547-residue polypeptide: Chaperonin GroEL (547 aa).

ATP contacts are provided by residues 30-33 (TLGP), Lys51, 87-91 (DGTTT), Gly415, and Asp496.

It belongs to the chaperonin (HSP60) family. In terms of assembly, forms a cylinder of 14 subunits composed of two heptameric rings stacked back-to-back. Interacts with the co-chaperonin GroES.

It localises to the cytoplasm. It catalyses the reaction ATP + H2O + a folded polypeptide = ADP + phosphate + an unfolded polypeptide.. Its function is as follows. Together with its co-chaperonin GroES, plays an essential role in assisting protein folding. The GroEL-GroES system forms a nano-cage that allows encapsulation of the non-native substrate proteins and provides a physical environment optimized to promote and accelerate protein folding. This Chlorobium phaeobacteroides (strain DSM 266 / SMG 266 / 2430) protein is Chaperonin GroEL.